The sequence spans 462 residues: tRNA(Ile)-lysidine synthase (462 aa).

Residue 26-31 (SGGVDS) coordinates ATP.

It belongs to the tRNA(Ile)-lysidine synthase family.

Its subcellular location is the cytoplasm. The enzyme catalyses cytidine(34) in tRNA(Ile2) + L-lysine + ATP = lysidine(34) in tRNA(Ile2) + AMP + diphosphate + H(+). Ligates lysine onto the cytidine present at position 34 of the AUA codon-specific tRNA(Ile) that contains the anticodon CAU, in an ATP-dependent manner. Cytidine is converted to lysidine, thus changing the amino acid specificity of the tRNA from methionine to isoleucine. This Enterococcus faecalis (strain ATCC 700802 / V583) protein is tRNA(Ile)-lysidine synthase.